The following is a 565-amino-acid chain: MTAYIQRSQCISTSLLVVLTTLVSCQIPRDRLSNIGVIVDEGKSLKIAGSHESRYIVLSLVPGVDFENGCGTAQVIQYKSLLNRLLIPLRDALDLQEALITVTNDTTQNAGAPQSRFFGAVIGTIALGVATSAQITAGIALAEAREAKRDIALIKESMTKTHKSIELLQNAVGEQILALKTLQDFVNDEIKPAISELGCETAALRLGIKLTQHYSELLTAFGSNFGTIGEKSLTLQALSSLYSANITEIMTTIKTGQSNIYDVIYTEQIKGTVIDVDLERYMVTLSVKIPILSEVPGVLIHKASSISYNIDGEEWYVTVPSHILSRASFLGGADITDCVESRLTYICPRDPAQLIPDSQQKCILGDTTRCPVTKVVDSLIPKFAFVNGGVVANCIASTCTCGTGRRPISQDRSKGVVFLTHDNCGLIGVNGVELYANRRGHDATWGVQNLTVGPAIAIRPIDISLNLADATNFLQDSKAELEKARKILSEVGRWYNSRETVITIIVVMVVILVVIIVIIIVLYRLRRSMLMGNPDDRIPRDTYTLEPKIRHMYTNGGFDAMAEKR.

An N-terminal signal peptide occupies residues 1–25; the sequence is MTAYIQRSQCISTSLLVVLTTLVSC. Over 26–500 the chain is Extracellular; that stretch reads QIPRDRLSNI…VGRWYNSRET (475 aa). Residues C70 and C199 are joined by a disulfide bond. N-linked (GlcNAc...) asparagine; by host glycosylation is present at N104. Residues 117–141 are fusion peptide; sequence FFGAVIGTIALGVATSAQITAGIAL. Residues 142–170 are a coiled coil; that stretch reads AEAREAKRDIALIKESMTKTHKSIELLQN. N245 carries N-linked (GlcNAc...) asparagine; by host glycosylation. The leucine-zipper stretch occupies residues 278 to 306; it reads LERYMVTLSVKIPILSEVPGVLIHKASSI. 4 cysteine pairs are disulfide-bonded: C338–C347, C362–C370, C394–C399, and C401–C424. N449 carries an N-linked (GlcNAc...) asparagine; by host glycan. Positions 466-491 form a coiled coil; sequence NLADATNFLQDSKAELEKARKILSEV. Residues 501–521 form a helical membrane-spanning segment; the sequence is VITIIVVMVVILVVIIVIIIV. Over 522–565 the chain is Cytoplasmic; the sequence is LYRLRRSMLMGNPDDRIPRDTYTLEPKIRHMYTNGGFDAMAEKR.

The protein belongs to the paramyxoviruses fusion glycoprotein family. As to quaternary structure, homotrimer of disulfide-linked F1-F2. Interacts with HN and M proteins. In natural infection, inactive F0 is matured into F1 and F2 outside the cell by one or more trypsin-like, arginine-specific endoprotease secreted by the bronchial epithelial cells. One identified protease that may be involved in this process is tryptase Clara. Unlike most paramyxoviruses, Sendai F0 processing occurs on the cell surface and induces a conformational change in the protein that unmasks the fusion peptide. F0 maturation is a primary determinant for organ tropism and pathogenicity. F1 and F2 display interchain and intrachain disulfide bonds, that are necessary for correct folding and intracellular transport. In terms of processing, N-glycosylated; glycans consist of a mixture of high mannose-type oligosaccharides and of complex-type oligosaccharides. Glycosylation at Asn-245 is essential for membrane localization and F0 cleavage.

It is found in the virion membrane. Its subcellular location is the host cell membrane. In terms of biological role, class I viral fusion protein. Under the current model, the protein has at least 3 conformational states: pre-fusion native state, pre-hairpin intermediate state, and post-fusion hairpin state. During viral and plasma cell membrane fusion, the heptad repeat (HR) regions assume a trimer-of-hairpins structure, positioning the fusion peptide in close proximity to the C-terminal region of the ectodomain. The formation of this structure appears to drive apposition and subsequent fusion of viral and plasma cell membranes. Directs fusion of viral and cellular membranes leading to delivery of the nucleocapsid into the cytoplasm. This fusion is pH independent and occurs directly at the outer cell membrane. The trimer of F1-F2 (F protein) interacts with HN tetramer at the virion surface. Upon HN binding to its cellular receptor, the hydrophobic fusion peptide is unmasked and interacts with the cellular membrane, inducing the fusion between cell and virion membranes. Later in infection, F proteins expressed at the plasma membrane of infected cells could mediate fusion with adjacent cells to form syncytia, a cytopathic effect that could lead to tissue necrosis. This Cavia cutleri (Guinea pig) protein is Fusion glycoprotein F0 (F).